The sequence spans 926 residues: Peripheral plasma membrane protein CASK (926 aa).

The Protein kinase domain occupies 12–276; it reads YELCEVIGKG…VYEALNHPWL (265 aa). Residues 18–26 and Lys-41 each bind ATP; that span reads IGKGPFSVV. At Ser-51 the chain carries Phosphoserine. Asp-141 is a catalytic residue. Phosphoserine; by autocatalysis occurs at positions 151 and 155. A Phosphothreonine modification is found at Thr-182. Positions 305 to 315 are calmodulin-binding; that stretch reads KGAVLAAVSSH. The residue at position 313 (Ser-313) is a Phosphoserine. 2 consecutive L27 domains span residues 343 to 398 and 402 to 455; these read AERA…SPQI and PSDA…YSDE. The tract at residues 482 to 909 is required for interaction with NRXN1 (via C-terminal tail); it reads MENVTRVRLV…DETIRHLEEA (428 aa). Positions 490–571 constitute a PDZ domain; sequence LVQFQKNTDE…SITFKIVPSY (82 aa). Ser-570 and Tyr-571 each carry phosphoserine. The tract at residues 574 to 610 is disordered; the sequence is QSSSCERDSPSTSRQSPANGHSSTNNSVSDLPSTTQP. Positions 612–682 constitute an SH3 domain; sequence GRQIYVRAQF…PSPELQEWRV (71 aa). A Guanylate kinase-like domain is found at 739–911; it reads RKTLVLLGAH…TIRHLEEAVE (173 aa).

The protein in the N-terminal section; belongs to the protein kinase superfamily. CAMK Ser/Thr protein kinase family. CaMK subfamily. This sequence belongs to the MAGUK family. CASK and LIN7 form a tripartite complex with CASKIN1. Component of the brain-specific heterotrimeric complex (LIN-10-LIN-2-LIN-7 complex) composed of at least APBA1, CASK, and LIN7, which associates with the motor protein KIF17 to transport vesicles along microtubules. Forms a heterotrimeric complex with DLG1 and LIN7B via their L27 domains. Identified in a complex with ACTN4, IQGAP1, MAGI2, NPHS1, SPTAN1 and SPTBN1. Part of a complex containing CASK, TBR1 and TSPYL2. Interacts with WHRN. Interacts (via the PDZ, SH3 and guanylate kinase-like domains) with NRXN1 (via C-terminus). Interacts with CASKIN1, APBA1, LIN7(A/B/C), and L27 domain of DLG1 and isoform 2 of DLG4. Interacts with FCHSD2. Interacts with KIRREL3. Interacts with TBR1. Interacts with TSPYL2. Requires Unlike other protein kinases, does not require a divalent cation such as magnesium for catalytic activity. as cofactor.

Its subcellular location is the nucleus. It is found in the cytoplasm. The protein resides in the cell membrane. It catalyses the reaction L-seryl-[protein] + ATP = O-phospho-L-seryl-[protein] + ADP + H(+). The enzyme catalyses L-threonyl-[protein] + ATP = O-phospho-L-threonyl-[protein] + ADP + H(+). With respect to regulation, differs from archetypal CaMK members in that the kinase domain exhibits a constitutively active conformation and the autoinhibitory region does not engage in direct contact with the ATP-binding cleft, although it still binds Ca(2+)/CAM. Its function is as follows. Multidomain scaffolding Mg(2+)-independent protein kinase that catalyzes the phosphotransfer from ATP to proteins such as NRXN1, and plays a role in synaptic transmembrane protein anchoring and ion channel trafficking. Contributes to neural development and regulation of gene expression via interaction with the transcription factor TBR1. Binds to cell-surface proteins, including amyloid precursor protein, neurexins, and syndecans. May mediate a link between the extracellular matrix and the actin cytoskeleton via its interaction with syndecan and with the actin/spectrin-binding protein 4.1. Component of the LIN-10-LIN-2-LIN-7 complex, which associates with the motor protein KIF17 to transport vesicles containing N-methyl-D-aspartate (NMDA) receptor subunit NR2B along microtubules. The sequence is that of Peripheral plasma membrane protein CASK from Mus musculus (Mouse).